The primary structure comprises 343 residues: Ribosomal RNA small subunit methyltransferase C (343 aa).

It belongs to the methyltransferase superfamily. RsmC family. As to quaternary structure, monomer.

The protein resides in the cytoplasm. The catalysed reaction is guanosine(1207) in 16S rRNA + S-adenosyl-L-methionine = N(2)-methylguanosine(1207) in 16S rRNA + S-adenosyl-L-homocysteine + H(+). Its function is as follows. Specifically methylates the guanine in position 1207 of 16S rRNA in the 30S particle. This is Ribosomal RNA small subunit methyltransferase C from Pseudoalteromonas atlantica (strain T6c / ATCC BAA-1087).